The sequence spans 294 residues: Pyrroline-5-carboxylate reductase (294 aa).

Belongs to the pyrroline-5-carboxylate reductase family.

The protein localises to the cytoplasm. The catalysed reaction is L-proline + NADP(+) = (S)-1-pyrroline-5-carboxylate + NADPH + 2 H(+). It catalyses the reaction L-proline + NAD(+) = (S)-1-pyrroline-5-carboxylate + NADH + 2 H(+). It participates in amino-acid biosynthesis; L-proline biosynthesis; L-proline from L-glutamate 5-semialdehyde: step 1/1. Functionally, catalyzes the reduction of 1-pyrroline-5-carboxylate (PCA) to L-proline. In Mycobacterium leprae (strain TN), this protein is Pyrroline-5-carboxylate reductase.